A 336-amino-acid polypeptide reads, in one-letter code: Dihydroorotate dehydrogenase (quinone) (336 aa).

Residues 62 to 66 (AGLDK) and T86 each bind FMN. K66 is a substrate binding site. 111–115 (NRMGF) serves as a coordination point for substrate. Residues N139 and N172 each contribute to the FMN site. N172 is a binding site for substrate. Catalysis depends on S175, which acts as the Nucleophile. A substrate-binding site is contributed by N177. Residues K217 and T245 each contribute to the FMN site. A substrate-binding site is contributed by 246–247 (NT). Residues G268, G297, and 318 to 319 (YS) contribute to the FMN site.

This sequence belongs to the dihydroorotate dehydrogenase family. Type 2 subfamily. As to quaternary structure, monomer. The cofactor is FMN.

The protein localises to the cell membrane. The enzyme catalyses (S)-dihydroorotate + a quinone = orotate + a quinol. The protein operates within pyrimidine metabolism; UMP biosynthesis via de novo pathway; orotate from (S)-dihydroorotate (quinone route): step 1/1. Its function is as follows. Catalyzes the conversion of dihydroorotate to orotate with quinone as electron acceptor. The protein is Dihydroorotate dehydrogenase (quinone) of Aeromonas salmonicida (strain A449).